A 335-amino-acid chain; its full sequence is tRNA N6-adenosine threonylcarbamoyltransferase (335 aa).

Residues H111 and H115 each contribute to the Fe cation site. Substrate is bound by residues 134 to 138, D167, G180, and N270; that span reads LISGG. A Fe cation-binding site is contributed by D298.

This sequence belongs to the KAE1 / TsaD family. It depends on Fe(2+) as a cofactor.

The protein localises to the cytoplasm. It carries out the reaction L-threonylcarbamoyladenylate + adenosine(37) in tRNA = N(6)-L-threonylcarbamoyladenosine(37) in tRNA + AMP + H(+). Functionally, required for the formation of a threonylcarbamoyl group on adenosine at position 37 (t(6)A37) in tRNAs that read codons beginning with adenine. Is involved in the transfer of the threonylcarbamoyl moiety of threonylcarbamoyl-AMP (TC-AMP) to the N6 group of A37, together with TsaE and TsaB. TsaD likely plays a direct catalytic role in this reaction. The chain is tRNA N6-adenosine threonylcarbamoyltransferase from Nitrosococcus oceani (strain ATCC 19707 / BCRC 17464 / JCM 30415 / NCIMB 11848 / C-107).